Reading from the N-terminus, the 548-residue chain is Thermosome subunit alpha (548 aa).

The disordered stretch occupies residues 527–548 (TKPEGGQGGGMPGGMGGMDMGM). A compositionally biased stretch (gly residues) spans 531–548 (GGQGGGMPGGMGGMDMGM).

The protein belongs to the TCP-1 chaperonin family. In terms of assembly, forms a Heterooligomeric complex of two stacked eight-membered rings.

Its function is as follows. Molecular chaperone; binds unfolded polypeptides in vitro, and has a weak ATPase activity. The polypeptide is Thermosome subunit alpha (thsA) (Thermococcus sp. (strain JCM 11816 / KS-1)).